The following is a 342-amino-acid chain: tRNA N6-adenosine threonylcarbamoyltransferase (342 aa).

Residues H111 and H115 each coordinate Fe cation. Residues 134 to 138 (LVSGG), D167, G180, and N276 contribute to the substrate site. D304 is a binding site for Fe cation.

The protein belongs to the KAE1 / TsaD family. The cofactor is Fe(2+).

It is found in the cytoplasm. It carries out the reaction L-threonylcarbamoyladenylate + adenosine(37) in tRNA = N(6)-L-threonylcarbamoyladenosine(37) in tRNA + AMP + H(+). Required for the formation of a threonylcarbamoyl group on adenosine at position 37 (t(6)A37) in tRNAs that read codons beginning with adenine. Is involved in the transfer of the threonylcarbamoyl moiety of threonylcarbamoyl-AMP (TC-AMP) to the N6 group of A37, together with TsaE and TsaB. TsaD likely plays a direct catalytic role in this reaction. The protein is tRNA N6-adenosine threonylcarbamoyltransferase of Helicobacter acinonychis (strain Sheeba).